Consider the following 268-residue polypeptide: Shikimate dehydrogenase (NADP(+)) (268 aa).

Threonine 62 provides a ligand contact to shikimate. Lysine 66 acts as the Proton acceptor in catalysis. Position 78 (glutamate 78) interacts with NADP(+). Shikimate contacts are provided by asparagine 87 and aspartate 102. Residues 126–130 and leucine 207 each bind NADP(+); that span reads GSGGI. Tyrosine 209 contacts shikimate. Residue glycine 230 coordinates NADP(+).

Belongs to the shikimate dehydrogenase family. As to quaternary structure, homodimer.

It catalyses the reaction shikimate + NADP(+) = 3-dehydroshikimate + NADPH + H(+). It functions in the pathway metabolic intermediate biosynthesis; chorismate biosynthesis; chorismate from D-erythrose 4-phosphate and phosphoenolpyruvate: step 4/7. Its function is as follows. Involved in the biosynthesis of the chorismate, which leads to the biosynthesis of aromatic amino acids. Catalyzes the reversible NADPH linked reduction of 3-dehydroshikimate (DHSA) to yield shikimate (SA). The protein is Shikimate dehydrogenase (NADP(+)) of Thermoplasma acidophilum (strain ATCC 25905 / DSM 1728 / JCM 9062 / NBRC 15155 / AMRC-C165).